A 281-amino-acid chain; its full sequence is Nucleotide-binding protein MADE_1004170 (281 aa).

ATP is bound at residue 8 to 15 (GRSGSGKS). A GTP-binding site is contributed by 56–59 (DVRN).

It belongs to the RapZ-like family.

Its function is as follows. Displays ATPase and GTPase activities. The sequence is that of Nucleotide-binding protein MADE_1004170 from Alteromonas mediterranea (strain DSM 17117 / CIP 110805 / LMG 28347 / Deep ecotype).